The chain runs to 119 residues: Large ribosomal subunit protein uL24 (119 aa).

The protein belongs to the universal ribosomal protein uL24 family. Part of the 50S ribosomal subunit.

Its function is as follows. One of two assembly initiator proteins, it binds directly to the 5'-end of the 23S rRNA, where it nucleates assembly of the 50S subunit. In terms of biological role, one of the proteins that surrounds the polypeptide exit tunnel on the outside of the subunit. This chain is Large ribosomal subunit protein uL24, found in Sulfurihydrogenibium sp. (strain YO3AOP1).